A 486-amino-acid polypeptide reads, in one-letter code: Membrane-bound lytic murein transglycosylase F (486 aa).

Residues 1-21 form the signal peptide; that stretch reads MTRIKLNYFVIGVVALLLALA. The tract at residues 22-268 is non-LT domain; that stretch reads LWPNIPWRNG…RLEEKYLGHV (247 aa). The interval 269-486 is LT domain; that stretch reads GSFDYVDTKT…VVGPGWSINN (218 aa). Residue Glu313 is part of the active site.

This sequence in the N-terminal section; belongs to the bacterial solute-binding protein 3 family. The protein in the C-terminal section; belongs to the transglycosylase Slt family.

It localises to the cell outer membrane. It catalyses the reaction Exolytic cleavage of the (1-&gt;4)-beta-glycosidic linkage between N-acetylmuramic acid (MurNAc) and N-acetylglucosamine (GlcNAc) residues in peptidoglycan, from either the reducing or the non-reducing ends of the peptidoglycan chains, with concomitant formation of a 1,6-anhydrobond in the MurNAc residue.. Murein-degrading enzyme that degrades murein glycan strands and insoluble, high-molecular weight murein sacculi, with the concomitant formation of a 1,6-anhydromuramoyl product. Lytic transglycosylases (LTs) play an integral role in the metabolism of the peptidoglycan (PG) sacculus. Their lytic action creates space within the PG sacculus to allow for its expansion as well as for the insertion of various structures such as secretion systems and flagella. This is Membrane-bound lytic murein transglycosylase F from Yersinia enterocolitica serotype O:8 / biotype 1B (strain NCTC 13174 / 8081).